A 592-amino-acid chain; its full sequence is Cell division protein FtsZ (592 aa).

GTP contacts are provided by residues Gly-24–Asn-28, Gly-111–Gly-113, Glu-142, Arg-146, and Asp-190. A disordered region spans residues Lys-333–Ser-362.

Belongs to the FtsZ family. In terms of assembly, homodimer. Polymerizes to form a dynamic ring structure in a strictly GTP-dependent manner. Interacts directly with several other division proteins.

The protein resides in the cytoplasm. In terms of biological role, essential cell division protein that forms a contractile ring structure (Z ring) at the future cell division site. The regulation of the ring assembly controls the timing and the location of cell division. One of the functions of the FtsZ ring is to recruit other cell division proteins to the septum to produce a new cell wall between the dividing cells. Binds GTP and shows GTPase activity. In Bartonella bacilliformis, this protein is Cell division protein FtsZ.